A 470-amino-acid chain; its full sequence is MTDDGTWSDESDWELGPDDISDAIEEVSAPPPVVAVVGRPNVGKSTLVNRILGRREAVVQDVPGVTRDRVSYDASWSGQRFMVQDTGGWEPDAKGLQQLVAEQASVAMRTADAIIFVVDSVVGATAADEAAAKLLQRSGKPVFLAANKVDNERGEADAAALWSLGLGEPHPISAMHGRGVADLLDAVVDALPTISEVAGAGGGGPRRVALVGKPNVGKSSLLNRLSGDERSVVHDVAGTTVDPVDSLIEMDGKLWRFVDTAGLRRKVGQASGHEFYASVRTHGAIDAAEVAIVLVDASQPLTEQDQRVLSMVVEAGRALVLAFNKWDLVDEDRRYLLDREIDLQLAQLQWAPRVNISAKTGRAVQKLVPALETALKSWDTRVSTGRLNTFFKEIVAATPPPVRGGKQPRILFATQATARPPTFVLFTTGFLEAGYRRFLERRLRETFGFEGSPIRINVRVREKRGPKARR.

EngA-type G domains follow at residues 32–195 (PVVA…PTIS) and 206–379 (RRVA…KSWD). GTP-binding positions include 38–45 (GRPNVGKS), 85–89 (DTGGW), 147–150 (NKVD), 212–219 (GKPNVGKS), 259–263 (DTAGL), and 324–327 (NKWD). A KH-like domain is found at 380-462 (TRVSTGRLNT…PIRINVRVRE (83 aa)).

It belongs to the TRAFAC class TrmE-Era-EngA-EngB-Septin-like GTPase superfamily. EngA (Der) GTPase family. In terms of assembly, associates with the 50S ribosomal subunit.

GTPase that plays an essential role in the late steps of ribosome biogenesis. The chain is GTPase Der from Mycolicibacterium vanbaalenii (strain DSM 7251 / JCM 13017 / BCRC 16820 / KCTC 9966 / NRRL B-24157 / PYR-1) (Mycobacterium vanbaalenii).